A 342-amino-acid polypeptide reads, in one-letter code: Periplasmic protein TorT (342 aa).

Positions 1 to 18 (MRVLLFLLLSLFMLPAFS) are cleaved as a signal peptide.

This sequence belongs to the bacterial solute-binding protein 2 family.

It is found in the periplasm. Upon binding a putative inducer it probably interacts with TorS and allows it to play a role in the induction of the torCAD operon for trimethylamine N-oxide reductase. The protein is Periplasmic protein TorT (torT) of Escherichia coli (strain K12).